Reading from the N-terminus, the 723-residue chain is Threonine--tRNA ligase, mitochondrial (723 aa).

Serine 57 bears the Phosphoserine mark. Residues 64–126 enclose the TGS domain; that stretch reads RTIKISLPEG…ETDCHLRFLT (63 aa).

The protein belongs to the class-II aminoacyl-tRNA synthetase family. As to quaternary structure, homodimer.

Its subcellular location is the mitochondrion matrix. The enzyme catalyses tRNA(Thr) + L-threonine + ATP = L-threonyl-tRNA(Thr) + AMP + diphosphate + H(+). Catalyzes the attachment of threonine to tRNA(Thr) in a two-step reaction: threonine is first activated by ATP to form Thr-AMP and then transferred to the acceptor end of tRNA(Thr). Also edits incorrectly charged tRNA(Thr) via its editing domain. The sequence is that of Threonine--tRNA ligase, mitochondrial (Tars2) from Rattus norvegicus (Rat).